The primary structure comprises 382 residues: Guanylate kinase 1 (382 aa).

The Guanylate kinase-like domain maps to 128–310 (QKPIVISGPS…CYENLKKLLS (183 aa)). 135 to 142 (GPSGVGKG) is a binding site for ATP. Catalysis depends on residues Arg-168, Arg-261, and Arg-272. The ATP site is built by Asn-295 and Asp-296.

This sequence belongs to the guanylate kinase family. As to quaternary structure, monomer.

Its subcellular location is the cytoplasm. The protein resides in the nucleus. It carries out the reaction GMP + ATP = GDP + ADP. Essential for recycling GMP and indirectly, cGMP. This chain is Guanylate kinase 1 (GK1), found in Oryza sativa subsp. japonica (Rice).